The chain runs to 938 residues: Protein zds1 (938 aa).

Residues 1–13 show a composition bias toward polar residues; that stretch reads MSSSSVSNTLSIE. 3 disordered regions span residues 1–140, 326–386, and 424–807; these read MSSS…LDKE, HRGK…VENQ, and SENK…EPKT. The segment covering 40–54 has biased composition (low complexity); that stretch reads LSGSSSEPLENNSSL. Residues 57 to 67 are compositionally biased toward basic and acidic residues; sequence STDDPSVEIRS. The span at 77 to 86 shows a compositional bias: polar residues; the sequence is NLLSDQNITI. Positions 116–126 are enriched in low complexity; it reads SDAQSSVPSFS. A compositionally biased stretch (basic and acidic residues) spans 127-140; that stretch reads EIHDGMSEEELDKE. Polar residues-rich tracts occupy residues 330–349 and 370–380; these read TSTL…TDTS and TSALSNSQNPS. Low complexity predominate over residues 429–440; that stretch reads ESAVASESSLSE. Composition is skewed to basic and acidic residues over residues 467 to 485 and 512 to 556; these read NKAE…DKSE and NKAE…KADD. Positions 558 to 567 are enriched in polar residues; the sequence is LPSNNKTEGY. The span at 587–596 shows a compositional bias: pro residues; the sequence is VIPPRVPTPV. Residues 622-635 show a composition bias toward basic and acidic residues; that stretch reads SSKKPEIFHERHIP. Residues 642-669 are compositionally biased toward polar residues; sequence NKPSKNNILKSTQVPVTPKQKSSTANKG. Positions 702-711 are enriched in basic residues; that stretch reads KEHKKDKQKK. Residues 715–725 are compositionally biased toward low complexity; the sequence is QISSSSKSASS. The span at 798-807 shows a compositional bias: basic and acidic residues; that stretch reads SDEKSTEPKT.

It localises to the cytoplasm. Its function is as follows. Has a role in establishing cell polarity. Also required for maintenance of cell wall integrity, sexual differentiation, calcium tolerance and cell morphology. Involved in Ras-MAPK signaling pathway at cell cortex. Has a role in meiosis. This chain is Protein zds1 (zds1), found in Schizosaccharomyces pombe (strain 972 / ATCC 24843) (Fission yeast).